A 317-amino-acid chain; its full sequence is Melanocyte-stimulating hormone receptor (317 aa).

Residues 1 to 37 (MPVQGSQRRLLGSLNSTPTATPKLGLAANQTGAWCLE) lie on the Extracellular side of the membrane. An N-linked (GlcNAc...) asparagine glycan is attached at asparagine 29. A helical transmembrane segment spans residues 38-63 (VSIPDGLFLSLGLVSLVENVLVVAAI). The Cytoplasmic segment spans residues 64–72 (AKNRNLHSP). Residues 73-93 (MYCFICCLALSDLLVSGSNML) form a helical membrane-spanning segment. Topologically, residues 94–118 (ETAVILLLEAGALAARAAVVQQLDN) are extracellular. The helical transmembrane segment at 119–140 (VIDVITCSSMLSSLCFLGAIAV) threads the bilayer. Over 141-163 (DRYISIFYALRYHSIVTLPRAQR) the chain is Cytoplasmic. A helical transmembrane segment spans residues 164 to 183 (VVAAIWVASVLFSTLFIAYY). Over 184-191 (DHAAVLLC) the chain is Extracellular. The chain crosses the membrane as a helical span at residues 192-211 (LVVFFLAMLVLMAVLYVHML). The Cytoplasmic portion of the chain corresponds to 212–240 (ARACQHAQGIAQLHKRQRPAHQGFGLKGA). A helical membrane pass occupies residues 241–266 (ATLTILLGIFFLCWGPFFLHLTLIVL). The Extracellular portion of the chain corresponds to 267 to 279 (CPQHPTCSCIFKN). A helical membrane pass occupies residues 280-300 (FNLFLALIICNAIIDPLIYAF). Residues 301-317 (RSQELRRTLKEVLLCSW) are Cytoplasmic-facing. A lipid anchor (S-palmitoyl cysteine) is attached at cysteine 315.

It belongs to the G-protein coupled receptor 1 family. As to quaternary structure, interacts with MGRN1, but does not undergo MGRN1-mediated ubiquitination; this interaction competes with GNAS-binding and thus inhibits agonist-induced cAMP production. Interacts with OPN3; the interaction results in a decrease in MC1R-mediated cAMP signaling and ultimately a decrease in melanin production in melanocytes.

The protein resides in the cell membrane. Its function is as follows. Receptor for MSH (alpha, beta and gamma) and ACTH. The activity of this receptor is mediated by G proteins which activate adenylate cyclase. Mediates melanogenesis, the production of eumelanin (black/brown) and phaeomelanin (red/yellow), via regulation of cAMP signaling in melanocytes. This is Melanocyte-stimulating hormone receptor (MC1R) from Colobus guereza (Mantled guereza).